A 517-amino-acid chain; its full sequence is MELEESGIREECGVFGCIASGDWPTQLDVPHVITLGLVGLQHRGQESAGIVTSDGSSVPKFRVHKGMGLVNHVFTEDNLKKLYVSNLGIGHTRYATTGKCELENCQPFVVETLHGKIAVAHNGELVNAARLRKKLLRHGIGLSTSSDSEMITQLLAYTPPQEQDDTPDWVARIKNLMKEAPAAYSLVIMHRDVIYAVRDPYGNRPLCIGRLMPVSDINDKEKKSSETEGWVVSSESCSFLSIGARYCHEVKPGEIVEISRHGVRTLDIIPRSNGDPVAFCIFEYVYFARPDSMFEDQMVYTVRYRCGQQLAVEAPVEADLVSTVPESATPAALGYATKCGLPYVEVLCKNRYVGRTFIQPNMRLRQLGVAKKFGVLSDNFKGKRIVLIDDSIVRGNTISPIIKLLKESGAKEVHIRVASPPIKHPCFMGINIPTKEELIANKPEFEYLAEYLGANSVVYLSVEGLVSSVQQEIKFKKQKVKKRDITIQENGNGLEYFEKTGHCTACLTGQYPVDLEW.

Residue Met1 is modified to N-acetylmethionine. Residues 1 to 11 constitute a propeptide that is removed on maturation; that stretch reads MELEESGIREE. Cys12 functions as the Nucleophile in the catalytic mechanism. The 250-residue stretch at 12-261 folds into the Glutamine amidotransferase type-2 domain; the sequence is CGVFGCIASG…PGEIVEISRH (250 aa). [4Fe-4S] cluster is bound at residue Cys280. Mg(2+) contacts are provided by Ser327, Asp389, and Asp390. The [4Fe-4S] cluster site is built by Cys426, Cys503, and Cys506.

This sequence in the C-terminal section; belongs to the purine/pyrimidine phosphoribosyltransferase family. As to quaternary structure, homotetramer. Mg(2+) is required as a cofactor. Requires [4Fe-4S] cluster as cofactor. As to expression, expressed at a high level in brain, heart, liver and stomach.

The enzyme catalyses 5-phospho-beta-D-ribosylamine + L-glutamate + diphosphate = 5-phospho-alpha-D-ribose 1-diphosphate + L-glutamine + H2O. It functions in the pathway purine metabolism; IMP biosynthesis via de novo pathway; N(1)-(5-phospho-D-ribosyl)glycinamide from 5-phospho-alpha-D-ribose 1-diphosphate: step 1/2. Activated by the substrate 5-phospho-alpha-D-ribosyl-1-pyrophosphate and inhibited by the purine ribonucleotides, the end products of purine biosynthesis. Catalyzes the formation of phosphoribosylamine from phosphoribosylpyrophosphate (PRPP) and glutamine. In Rattus norvegicus (Rat), this protein is Amidophosphoribosyltransferase (Ppat).